The following is a 400-amino-acid chain: Argininosuccinate synthase (400 aa).

ATP is bound by residues 10-18 (AYSGGVDTS) and A38. Residue Y89 coordinates L-citrulline. Residue G119 participates in ATP binding. L-aspartate contacts are provided by T121, N125, and D126. Residue N125 coordinates L-citrulline. 5 residues coordinate L-citrulline: R129, S177, S186, E262, and Y274.

This sequence belongs to the argininosuccinate synthase family. Type 1 subfamily. Homotetramer.

Its subcellular location is the cytoplasm. It carries out the reaction L-citrulline + L-aspartate + ATP = 2-(N(omega)-L-arginino)succinate + AMP + diphosphate + H(+). The protein operates within amino-acid biosynthesis; L-arginine biosynthesis; L-arginine from L-ornithine and carbamoyl phosphate: step 2/3. This Nostoc sp. (strain PCC 7120 / SAG 25.82 / UTEX 2576) protein is Argininosuccinate synthase.